Here is a 499-residue protein sequence, read N- to C-terminus: Potassium voltage-gated channel subfamily A member 2 (499 aa).

The tract at residues 1-27 is disordered; it reads MTVATGDLTDGSVGFAGHPQDSYDPEP. A tetramerization domain region spans residues 1–125; that stretch reads MTVATGDLTD…YELGEEAMEI (125 aa). Topologically, residues 1-160 are cytoplasmic; that stretch reads MTVATGDLTD…LLFEYPESSG (160 aa). The chain crosses the membrane as a helical span at residues 161-182; it reads PARIIAIISVTVILISIVSFCL. At 183–221 the chain is on the extracellular side; the sequence is ETLPVFRDENEDMHGSGGNYYSYPNSTVRFQKSNTFTDP. N-linked (GlcNAc...) asparagine glycosylation occurs at N207. Residues 222–243 traverse the membrane as a helical segment; that stretch reads FFIVETLCIIWFSFEFLVRFLA. A lipid anchor (S-palmitoyl cysteine) is attached at C244. The Cytoplasmic segment spans residues 244–254; that stretch reads CPSKAVFFTNL. The chain crosses the membrane as a helical span at residues 255–275; it reads MNIIDIVAIIPYFITLGTELA. Over 276–289 the chain is Extracellular; sequence EKTEDGQQGQQAMS. A helical; Voltage-sensor membrane pass occupies residues 290-310; the sequence is LAILRVIRLVRVFRIFKLSRH. Topologically, residues 311–325 are cytoplasmic; sequence SKGLQILGQTLNASM. The S4-S5 linker stretch occupies residues 312 to 325; that stretch reads KGLQILGQTLNASM. A helical membrane pass occupies residues 326–347; it reads RELGLLIFFLFIGVILFSSAVF. At 348–361 the chain is on the extracellular side; sequence FAEADERDSQFPSI. The segment at residues 362-373 is an intramembrane region (helical); that stretch reads PDAFWWAVVSMT. The Selectivity filter signature appears at 374–379; the sequence is TVGYGD. An intramembrane segment occupies 374-381; the sequence is TVGYGDMV. Over 382-388 the chain is Extracellular; the sequence is PTTIGGK. A helical transmembrane segment spans residues 389 to 417; it reads IVGSLCAIAGVLTIALPVPVIVSNFNYFY. Residues 418–499 lie on the Cytoplasmic side of the membrane; the sequence is HRETEGEEQA…VNITKMLTDV (82 aa). Residues 497 to 499 carry the PDZ-binding motif; sequence TDV.

It belongs to the potassium channel family. A (Shaker) (TC 1.A.1.2) subfamily. Kv1.2/KCNA2 sub-subfamily. In terms of assembly, homotetramer and heterotetramer with other family members. Detected in tadpole brain and spinal cord.

It localises to the cell membrane. The enzyme catalyses K(+)(in) = K(+)(out). Its function is as follows. Voltage-gated potassium channel that mediates transmembrane potassium transport in excitable membranes, primarily in the brain and central nervous system. Prevents aberrant action potential firing and regulates neuronal output. Forms tetrameric potassium-selective channels through which potassium ions pass in accordance with their electrochemical gradient. The channel alternates between opened and closed conformations in response to the voltage difference across the membrane. Can form functional homotetrameric channels and heterotetrameric channels with other family members; the channels characteristics depend critically on the types of channel-forming alpha subunits that are present. Channel properties are modulated by cytoplasmic beta subunits that regulate the subcellular location of the alpha subunits. In vivo, membranes probably contain a mixture of heteromeric potassium channel complexes, making it difficult to assign currents observed in intact tissues to any particular potassium channel family member. Homotetrameric KCNA2 forms a delayed-rectifier potassium channel that opens in response to membrane depolarization, followed by slow spontaneous channel closure. Regulates neuronal excitability and plays a role as pacemaker in the regulation of neuronal action potentials. KCNA2-containing channels play a presynaptic role and prevent hyperexcitability and aberrant action potential firing. Response to toxins that are selective for KCNA2-containing potassium channels suggests that in Purkinje cells, dendritic subthreshold KCNA2-containing potassium channels prevent random spontaneous calcium spikes, suppressing dendritic hyperexcitability without hindering the generation of somatic action potentials, and thereby play an important role in motor coordination. Plays a role in the induction of long-term potentiation of neuron excitability in the CA3 layer of the hippocampus. This chain is Potassium voltage-gated channel subfamily A member 2 (kcna2), found in Xenopus laevis (African clawed frog).